The primary structure comprises 156 residues: ATP synthase subunit b (156 aa).

The helical transmembrane segment at 7–29 (LLGQAISFLLFVWFCMKFVWPPL) threads the bilayer.

This sequence belongs to the ATPase B chain family. As to quaternary structure, F-type ATPases have 2 components, F(1) - the catalytic core - and F(0) - the membrane proton channel. F(1) has five subunits: alpha(3), beta(3), gamma(1), delta(1), epsilon(1). F(0) has three main subunits: a(1), b(2) and c(10-14). The alpha and beta chains form an alternating ring which encloses part of the gamma chain. F(1) is attached to F(0) by a central stalk formed by the gamma and epsilon chains, while a peripheral stalk is formed by the delta and b chains.

It localises to the cell inner membrane. Its function is as follows. F(1)F(0) ATP synthase produces ATP from ADP in the presence of a proton or sodium gradient. F-type ATPases consist of two structural domains, F(1) containing the extramembraneous catalytic core and F(0) containing the membrane proton channel, linked together by a central stalk and a peripheral stalk. During catalysis, ATP synthesis in the catalytic domain of F(1) is coupled via a rotary mechanism of the central stalk subunits to proton translocation. Functionally, component of the F(0) channel, it forms part of the peripheral stalk, linking F(1) to F(0). This Shewanella halifaxensis (strain HAW-EB4) protein is ATP synthase subunit b.